The sequence spans 498 residues: ADP,ATP carrier protein 1 (498 aa).

The Cytoplasmic segment spans residues 1–33 (MNNPKNDNYLSELSKVIWPIERYENKKFLPMAF). A helical transmembrane segment spans residues 34–54 (MMFCILLNYSTLRSIKDGFVV). Cys37 and Cys85 are disulfide-bonded. Residues 55–67 (TDIGAEAISFLKT) lie on the Extracellular side of the membrane. A helical transmembrane segment spans residues 68–88 (YIVLPSAVIAMVIYVKLCDIL). The Cytoplasmic portion of the chain corresponds to 89 to 92 (KQEN). Residues 93–113 (VFYVITSFFLGYFALFAFVLY) traverse the membrane as a helical segment. Topologically, residues 114 to 147 (PYPDLVHPDPETIESWSVAYPNVKWFIRIVGKWS) are extracellular. The chain crosses the membrane as a helical span at residues 148-168 (FASFYTMAELWGTMMLSLLFW). Residues 169 to 184 (QFANQITKTDEAKRFY) lie on the Cytoplasmic side of the membrane. Residues 185 to 205 (SMFGLLANLALPVTSVIIGYC) traverse the membrane as a helical segment. Residues 206-218 (LHEKTQIVAEHLK) are Extracellular-facing. Residues 219–239 (FVPLFVIMITSSFLVILTYRW) form a helical membrane-spanning segment. At 240–279 (MNKNVLTDPRLYDPALVKEKKAKAKMSLIDSFKMIFTSKY) the chain is on the cytoplasmic side. A helical membrane pass occupies residues 280 to 300 (VGYIALLLIAYGVSVNLVEGV). Over 301–320 (WKSKVKELYPTKEAYTIYMG) the chain is Extracellular. A helical membrane pass occupies residues 321–341 (KFQFYQGWVAIAFMLIGSNIL). The Cytoplasmic segment spans residues 342–348 (RKVSWLT). The helical transmembrane segment at 349–369 (AAMITPLMMLITGAAFFAFIF) threads the bilayer. The Extracellular segment spans residues 370-379 (FDSVIAMHLT). Residues 380 to 400 (GILASGPLALAVMIGMIQNVL) traverse the membrane as a helical segment. The Cytoplasmic segment spans residues 401 to 438 (SKGVKYSLFDATKNMAYIPLDKDLRVKGQAAVEVIGGR). 436-442 (GGRFGKS) contributes to the ATP binding site. Residues 439-459 (FGKSGGAIIQSTFFILFPAFG) traverse the membrane as a helical segment. Residues 460–465 (FVEATP) lie on the Extracellular side of the membrane. Residues 466 to 486 (YFASIFFVIVILWIYAVKGLN) traverse the membrane as a helical segment. Residues 487 to 498 (KEYKVLVNKTEK) are Cytoplasmic-facing.

The protein belongs to the ADP/ATP translocase tlc family.

Its subcellular location is the cell membrane. Its function is as follows. Provides the rickettsial cell with host ATP in exchange for rickettsial ADP. This is an obligate exchange system. This energy acquiring activity is an important component of rickettsial parasitism. This is ADP,ATP carrier protein 1 (tlcA) from Rickettsia conorii (strain ATCC VR-613 / Malish 7).